Reading from the N-terminus, the 55-residue chain is Large ribosomal subunit protein bL33 (55 aa).

The protein belongs to the bacterial ribosomal protein bL33 family.

The polypeptide is Large ribosomal subunit protein bL33 (Yersinia enterocolitica serotype O:8 / biotype 1B (strain NCTC 13174 / 8081)).